A 147-amino-acid polypeptide reads, in one-letter code: Ras-related protein RabK2 (147 aa).

GTP-binding positions include 11–15 and 63–66; these read NTHGS and TKSD. Residue C145 is the site of S-geranylgeranyl cysteine attachment.

It belongs to the small GTPase superfamily. Rab family.

It localises to the cell membrane. The chain is Ras-related protein RabK2 (rabK2) from Dictyostelium discoideum (Social amoeba).